A 230-amino-acid polypeptide reads, in one-letter code: Uracil-DNA glycosylase (230 aa).

The Proton acceptor role is filled by Asp-65.

It belongs to the uracil-DNA glycosylase (UDG) superfamily. UNG family.

The protein resides in the cytoplasm. It carries out the reaction Hydrolyzes single-stranded DNA or mismatched double-stranded DNA and polynucleotides, releasing free uracil.. Excises uracil residues from the DNA which can arise as a result of misincorporation of dUMP residues by DNA polymerase or due to deamination of cytosine. The sequence is that of Uracil-DNA glycosylase from Lactiplantibacillus plantarum (strain ATCC BAA-793 / NCIMB 8826 / WCFS1) (Lactobacillus plantarum).